A 100-amino-acid chain; its full sequence is MDLSPREKDKLLIFTAGLLAERRLARGLKLNYPEAVALISAALLEGARDGRSVAELMHYGTTLLSREQVMEGVPEMIPDIQVEATFPDGTKLVTVHQPIA.

This sequence belongs to the urease gamma subunit family. As to quaternary structure, heterotrimer of UreA (gamma), UreB (beta) and UreC (alpha) subunits. Three heterotrimers associate to form the active enzyme.

It localises to the cytoplasm. It catalyses the reaction urea + 2 H2O + H(+) = hydrogencarbonate + 2 NH4(+). The protein operates within nitrogen metabolism; urea degradation; CO(2) and NH(3) from urea (urease route): step 1/1. The chain is Urease subunit gamma from Pseudomonas aeruginosa (strain UCBPP-PA14).